A 547-amino-acid chain; its full sequence is CAP-Gly domain-containing linker protein 3 (547 aa).

The segment at 1-49 (MTKTDPAPMAPPPRGEEEEEEEEDEPVPEAPSPTQERRQKPVVHPSAPA) is disordered. Residues 16 to 27 (EEEEEEEEDEPV) show a composition bias toward acidic residues. ANK repeat units lie at residues 117–158 (TDMT…LRSR), 160–191 (TNMN…VVNS), and 197–229 (NHGS…LRNR). Residues 314 to 356 (GTTEFASGQWVGVELDEPEGKNDGSVGGVRYFICPPKQGLFAS) form the CAP-Gly 1 domain. A disordered region spans residues 365–413 (DAPPSSVTSTPRTPRMDFSRVTGKGRREHKGKKKTPSSPSLGSLQQRDG). The segment covering 367–377 (PPSSVTSTPRT) has biased composition (low complexity). Residue Thr374 is modified to Phosphothreonine. The segment covering 387–399 (GKGRREHKGKKKT) has biased composition (basic residues). A compositionally biased stretch (polar residues) spans 400 to 410 (PSSPSLGSLQQ). Position 401 is a phosphoserine (Ser401). The region spanning 436–478 (GKTDFAPGYWYGIELDQPTGKHDGSVFGVRYFTCPPRHGVFAP) is the CAP-Gly 2 domain. Positions 488–547 (STDSPGDSVGAKKVHQVTMTQPKRTFTTVRTPKDIASENSISRLLFCCWFPWMLRAEMQS) are goLD. Residues Cys534 and Cys535 are each lipidated (S-palmitoyl cysteine).

In terms of assembly, homodimer. Interacts with AKT1 and AKT2; when AKT1 and AKT2 are phosphorylated and activated, affinity is higher for AKT2. Interacts with ZDHHC13 (via ANK repeats). Interacts with ZDHHC17 (via ANK repeats). In terms of processing, palmitoylation by ZDHHC17 regulates association with the plasma membrane.

The protein resides in the cell membrane. It localises to the cytoplasm. Its subcellular location is the golgi apparatus. It is found in the golgi stack. Functionally, functions as a cytoplasmic linker protein. Involved in TGN-endosome dynamics. May modulate the cellular compartmentalization of AKT kinase family and promote its cell membrane localization, thereby playing a role in glucose transport in adipocytes. This chain is CAP-Gly domain-containing linker protein 3 (CLIP3), found in Homo sapiens (Human).